Here is a 204-residue protein sequence, read N- to C-terminus: Phosphopantothenoylcysteine decarboxylase (204 aa).

FMN-binding positions include Phe-59 and 104 to 107 (DANT). Position 140 (Asn-140) interacts with substrate. The active-site Proton donor is Cys-173.

It belongs to the HFCD (homooligomeric flavin containing Cys decarboxylase) superfamily. Homotrimer. The cofactor is FMN.

It carries out the reaction N-[(R)-4-phosphopantothenoyl]-L-cysteine + H(+) = (R)-4'-phosphopantetheine + CO2. The protein operates within cofactor biosynthesis; coenzyme A biosynthesis; CoA from (R)-pantothenate: step 3/5. Catalyzes the decarboxylation of the cysteine moiety of 4-phosphopantothenoylcysteine to form 4'-phosphopantotheine and this reaction forms part of the biosynthesis of coenzyme A. The polypeptide is Phosphopantothenoylcysteine decarboxylase (PPCDC) (Homo sapiens (Human)).